Consider the following 1004-residue polypeptide: Liprin-beta homolog (1004 aa).

2 stretches are compositionally biased toward low complexity: residues 50 to 63 (NGNS…TIGS) and 149 to 161 (SPPS…SSSL). Disordered stretches follow at residues 50–122 (NGNS…RSSR) and 135–161 (HRTD…SSSL). 2 coiled-coil regions span residues 280-328 (CQEL…VNQS) and 364-396 (DEMS…ALDE). 4 disordered regions span residues 341 to 366 (HTNG…DDEM), 432 to 497 (PSDS…GGNQ), 528 to 550 (NGNE…GKAS), and 648 to 686 (FSKL…LGTV). The segment covering 434–453 (DSMSHSTSFPVSLSSTTSNG) has biased composition (polar residues). Residues 458-474 (STVQSSSSYNSSLSAVS) are compositionally biased toward low complexity. 2 stretches are compositionally biased toward polar residues: residues 531–541 (EGANHNYSSAS) and 648–684 (FSKL…NHLG). 3 SAM domains span residues 698 to 762 (WRSE…IEED), 770 to 833 (WDVH…LKKA), and 858 to 930 (VVRW…LLGP).

It belongs to the liprin family. Liprin-beta subfamily. In terms of tissue distribution, expressed in pharyngeal muscle, particularly posterior bulb, adjacent to the dorsal and ventral cord (but not in ventral cord neurons), and in body wall muscles.

In terms of biological role, involved in the regulation of synaptic function at neuromuscular junctions. Together with the liprin-alpha protein syd-2, may play a role in regulating the structure of the neuronal region, called the active zone, from which synaptic vesicles send neurotransmitter signals across the synapse. Does not seem to be required for neuronal development. May regulate the disassembly of focal adhesions. Does not bind receptor-like tyrosine phosphatases type 2A. This Caenorhabditis elegans protein is Liprin-beta homolog.